We begin with the raw amino-acid sequence, 397 residues long: MERFKKASSIIETLKQQGHEAYFVGGSVRDLIIDRPIGDIDIATSALPEEVMAIFPRHVPVGLEHGTVIVVENGEPYEVTTFRTESEYEDFRRPSSVQFVRSLEEDLKRRDFTMNAIAMTEEGKMVDLFAGQEAIQKREIVTVGNAADRFQEDALRMMRGIRFVSTLGFSLETKTKQAIETYGHLLEHIAIERITVEFEKLLTGTYCVKALKELVETKLFSHLPYLQMSEEKLLKATQYKWDSFEADIEAWAFFLYCIGEEHPAVFLRQWKFSNKKIKDIVAVLLTIRKRKEKDWDTVFLYKTGIHIAEMAERVYEAMIESYDHTAVNRVQTLFQALPIKNRQEMNVTGNDLLNWASKKPGPWVAEMIQKIEEAIVQGNVVNEKECIREWLQECNLL.

Residues G26 and R29 each coordinate ATP. Positions 26 and 29 each coordinate CTP. D39 and D41 together coordinate Mg(2+). R110, D153, R156, R159, and R162 together coordinate ATP. CTP contacts are provided by R110, D153, R156, R159, and R162.

It belongs to the tRNA nucleotidyltransferase/poly(A) polymerase family. Bacterial CCA-adding enzyme type 3 subfamily. Homodimer. Mg(2+) serves as cofactor.

It catalyses the reaction a tRNA precursor + 2 CTP + ATP = a tRNA with a 3' CCA end + 3 diphosphate. The catalysed reaction is a tRNA with a 3' CCA end + 2 CTP + ATP = a tRNA with a 3' CCACCA end + 3 diphosphate. In terms of biological role, catalyzes the addition and repair of the essential 3'-terminal CCA sequence in tRNAs without using a nucleic acid template. Adds these three nucleotides in the order of C, C, and A to the tRNA nucleotide-73, using CTP and ATP as substrates and producing inorganic pyrophosphate. tRNA 3'-terminal CCA addition is required both for tRNA processing and repair. Also involved in tRNA surveillance by mediating tandem CCA addition to generate a CCACCA at the 3' terminus of unstable tRNAs. While stable tRNAs receive only 3'-terminal CCA, unstable tRNAs are marked with CCACCA and rapidly degraded. The polypeptide is CCA-adding enzyme (Bacillus cereus (strain AH187)).